Reading from the N-terminus, the 354-residue chain is DNA integrity scanning protein DisA (354 aa).

One can recognise a DAC domain in the interval 6-144; sequence GIGIKNVLKI…GDIKYVLRES (139 aa). ATP-binding positions include G73, L91, and 104-108; that span reads TRHRT.

This sequence belongs to the DisA family. Homooctamer. Requires Mg(2+) as cofactor.

It carries out the reaction 2 ATP = 3',3'-c-di-AMP + 2 diphosphate. Functionally, participates in a DNA-damage check-point that is active prior to asymmetric division when DNA is damaged. DisA forms globular foci that rapidly scan along the chromosomes during sporulation, searching for lesions. When a lesion is present, DisA pauses at the lesion site. This triggers a cellular response that culminates in a temporary block in sporulation initiation. In terms of biological role, also has diadenylate cyclase activity, catalyzing the condensation of 2 ATP molecules into cyclic di-AMP (c-di-AMP). c-di-AMP acts as a signaling molecule that couples DNA integrity with progression of sporulation. The rise in c-di-AMP level generated by DisA while scanning the chromosome, operates as a positive signal that advances sporulation; upon encountering a lesion, the DisA focus arrests at the damaged site and halts c-di-AMP synthesis. This Clostridium beijerinckii (strain ATCC 51743 / NCIMB 8052) (Clostridium acetobutylicum) protein is DNA integrity scanning protein DisA.